The chain runs to 260 residues: Indole-3-glycerol phosphate synthase (260 aa).

It belongs to the TrpC family.

The catalysed reaction is 1-(2-carboxyphenylamino)-1-deoxy-D-ribulose 5-phosphate + H(+) = (1S,2R)-1-C-(indol-3-yl)glycerol 3-phosphate + CO2 + H2O. It participates in amino-acid biosynthesis; L-tryptophan biosynthesis; L-tryptophan from chorismate: step 4/5. The chain is Indole-3-glycerol phosphate synthase from Staphylococcus haemolyticus (strain JCSC1435).